We begin with the raw amino-acid sequence, 186 residues long: MISTPLSKEFEWPAKPVSLELQHQVEQFYYREAQLLDHHAFQAWFALLAEDIHYWMPIRTVRTAREQGLEYVPAGANAHFDDTHATMYGRIRQKTSDLNWAEDPPSRTRHLVSNVIVREMDTPGTLEVASAFLLYRSRLERQVDVFAGERRDVLRIADNPLGFQIAKRTIILDQSTVLANNLSVFF.

It belongs to the bacterial ring-hydroxylating dioxygenase beta subunit family. As to quaternary structure, heterohexamer consisting of 3 BphA subunits and 3 BphE subunits. A ferredoxin (BphF) and a ferredoxin reductase (BphG) must be present to obtain activity.

It carries out the reaction biphenyl + NADH + O2 + H(+) = (2R,3S)-3-phenylcyclohexa-3,5-diene-1,2-diol + NAD(+). Its pathway is xenobiotic degradation; biphenyl degradation; 2-hydroxy-2,4-pentadienoate and benzoate from biphenyl: step 1/4. Functionally, the beta subunit may be responsible for the substrate specificity of the enzyme. The protein is Biphenyl dioxygenase subunit beta (bphE) of Comamonas testosteroni (Pseudomonas testosteroni).